The sequence spans 464 residues: Trehalose-6-phosphate synthase (464 aa).

A D-glucose 6-phosphate-binding site is contributed by Arg10. A UDP-alpha-D-glucose-binding site is contributed by 23 to 24 (GG). Residues Tyr81 and Asp135 each coordinate D-glucose 6-phosphate. The UDP-alpha-D-glucose site is built by Arg268 and Lys273. Arg306 provides a ligand contact to D-glucose 6-phosphate. UDP-alpha-D-glucose is bound at residue 371–375 (LVAKE).

Belongs to the glycosyltransferase 20 family. In terms of assembly, homotetramer.

The enzyme catalyses D-glucose 6-phosphate + UDP-alpha-D-glucose = alpha,alpha-trehalose 6-phosphate + UDP + H(+). The protein operates within glycan biosynthesis; trehalose biosynthesis. In terms of biological role, probably involved in the osmoprotection via the biosynthesis of trehalose. Catalyzes the transfer of glucose from UDP-alpha-D-glucose (UDP-Glc) to D-glucose 6-phosphate (Glc-6-P) to form trehalose-6-phosphate. Acts with retention of the anomeric configuration of the UDP-sugar donor. This is Trehalose-6-phosphate synthase from Sinorhizobium fredii (strain NBRC 101917 / NGR234).